The following is a 348-amino-acid chain: MPDIKLKNQPFDVAFHPKEPVVFSSLLTGQVCAWSYDDATGETSSSWSVRPSKRTARALSIEENGDEIWMGGKSGSLFQLSTRDGSMTRERDSAHECPINRVYCVNRNLVATGDDDGVIKLWDPRQADSIRTYSQHFDYISDFTYFDDKRQLVATSGDGHLSVIDIRSNKSTPLTVSEDQEDELLSIVPIKGGQKAIVGSGLGILSVWNRQMGWADSVDRIPGHPASIDAIVALTPDIIATGSEDGMIRVIQVLPHKFLGVVATHEEFPVERIRLDRNNKWLGSVSHDECLKLTDVEDLFEDSDEDDEMEEDEPDSDEEKSKKKKKDNGMKDMSRGQAENDGSFFADL.

WD repeat units follow at residues 5–44, 51–90, 94–132, 135–174, 179–218, 223–261, and 264–304; these read KLKN…GETS, PSKR…MTRE, AHEC…SIRT, QHFD…STPL, DQED…ADSV, GHPA…FLGV, and THEE…EDSD. Residues 299–318 show a composition bias toward acidic residues; it reads LFEDSDEDDEMEEDEPDSDE. Residues 299 to 348 are disordered; it reads LFEDSDEDDEMEEDEPDSDEEKSKKKKKDNGMKDMSRGQAENDGSFFADL.

Belongs to the WD repeat WDR55 family.

It localises to the nucleus. The protein resides in the nucleolus. This Cryptococcus neoformans var. neoformans serotype D (strain JEC21 / ATCC MYA-565) (Filobasidiella neoformans) protein is WD repeat-containing protein JIP5 (JIP5).